Here is a 186-residue protein sequence, read N- to C-terminus: dCTP deaminase, dUMP-forming (186 aa).

Residues 101–106 (RSSLGR), aspartate 119, 127–129 (TLE), glutamine 148, tyrosine 162, and glutamine 171 each bind dCTP. The active-site Proton donor/acceptor is glutamate 129.

It belongs to the dCTP deaminase family. Homotrimer.

It catalyses the reaction dCTP + 2 H2O = dUMP + NH4(+) + diphosphate. It functions in the pathway pyrimidine metabolism; dUMP biosynthesis; dUMP from dCTP: step 1/1. Bifunctional enzyme that catalyzes both the deamination of dCTP to dUTP and the hydrolysis of dUTP to dUMP without releasing the toxic dUTP intermediate. In Coprothermobacter proteolyticus (strain ATCC 35245 / DSM 5265 / OCM 4 / BT), this protein is dCTP deaminase, dUMP-forming.